Reading from the N-terminus, the 273-residue chain is Dermonecrotic toxin LspaSicTox-alphaIA1iii (273 aa).

H5 is a catalytic residue. E25 and D27 together coordinate Mg(2+). The active-site Nucleophile is H41. 2 disulfides stabilise this stretch: C45/C51 and C47/C190. D85 is a Mg(2+) binding site.

This sequence belongs to the arthropod phospholipase D family. Class II subfamily. It depends on Mg(2+) as a cofactor. In terms of tissue distribution, expressed by the venom gland.

It localises to the secreted. The catalysed reaction is an N-(acyl)-sphingosylphosphocholine = an N-(acyl)-sphingosyl-1,3-cyclic phosphate + choline. The enzyme catalyses an N-(acyl)-sphingosylphosphoethanolamine = an N-(acyl)-sphingosyl-1,3-cyclic phosphate + ethanolamine. It carries out the reaction a 1-acyl-sn-glycero-3-phosphocholine = a 1-acyl-sn-glycero-2,3-cyclic phosphate + choline. It catalyses the reaction a 1-acyl-sn-glycero-3-phosphoethanolamine = a 1-acyl-sn-glycero-2,3-cyclic phosphate + ethanolamine. Its function is as follows. Dermonecrotic toxins cleave the phosphodiester linkage between the phosphate and headgroup of certain phospholipids (sphingolipid and lysolipid substrates), forming an alcohol (often choline) and a cyclic phosphate. This toxin acts on sphingomyelin (SM). It may also act on ceramide phosphoethanolamine (CPE), lysophosphatidylcholine (LPC) and lysophosphatidylethanolamine (LPE), but not on lysophosphatidylserine (LPS), and lysophosphatidylglycerol (LPG). It acts by transphosphatidylation, releasing exclusively cyclic phosphate products as second products. Induces dermonecrosis, hemolysis, increased vascular permeability, edema, inflammatory response, and platelet aggregation. The sequence is that of Dermonecrotic toxin LspaSicTox-alphaIA1iii from Loxosceles spadicea (Recluse spider).